The following is a 704-amino-acid chain: Rabphilin-3A (704 aa).

Residues 1–12 (MTDTVFSSSSSR) show a composition bias toward polar residues. The disordered stretch occupies residues 1-52 (MTDTVFSSSSSRWMCPSDRPLQSNDKEQLQTGWSVHPSGQPDRQRKQEELTD). One can recognise a RabBD domain in the interval 44–161 (QRKQEELTDE…KRSGAWFFKG (118 aa)). An FYVE-type zinc finger spans residues 92 to 149 (GDGVNRCILCGEQLGMLGSACVVCEDCKKNVCTKCGVETSNNRPHPVWLCKICIEQRE). Zn(2+) is bound by residues Cys-98, Cys-101, Cys-115, Cys-118, Cys-123, Cys-126, Cys-141, and Cys-144. A disordered region spans residues 167-398 (LPQPMPIKKN…EEEANSYDSD (232 aa)). Residues 205 to 214 (TRGDTEDRRG) are compositionally biased toward basic and acidic residues. Arg-229 carries the post-translational modification Omega-N-methylarginine. At Ser-277 the chain carries Phosphoserine. Over residues 279-290 (QASRPAPASMQS) the composition is skewed to low complexity. Residues 291–310 (PAPPQPGQPGPPGGSRPSPG) show a composition bias toward pro residues. Residues 366–380 (QASAAAPQPVVASAR) are compositionally biased toward low complexity. The span at 385–398 (PEEDEEEANSYDSD) shows a compositional bias: acidic residues. Residues 402–524 (TLGALEFSLL…KPNQRKNFNI (123 aa)) enclose the C2 1 domain. The Ca(2+) site is built by Met-432, Asp-433, Asp-439, Asp-494, Glu-495, Asp-496, Glu-502, Glu-549, Asp-591, Asp-597, Asp-651, Tyr-652, Asp-653, and Asp-659. One can recognise a C2 2 domain in the interval 560-693 (ERGKILVSLM…NKDKKIERWH (134 aa)). Ser-702 and Ser-703 each carry phosphoserine.

As to quaternary structure, interacts with RAB3B, RAB3C, RAB3D, RAB8A, RAB27A and RAB27B. Interacts with RAB3A; this interaction recruits RPH3A to synaptic vesicules. Interacts (via C2B domain) with SNAP25. Interacts with deubiquitinating enzyme CAND1; this interaction results in the deubiquitination of RPH3A. Interacts with GRIN2A and DLG4; this ternary complex regulates NMDA receptor composition at postsynaptic membranes. Interacts with SNCA. It depends on Ca(2+) as a cofactor. Post-translationally, ubiquitinated. Deubiquitinated by CAND1 to prevent its degradation. As to expression, specifically expressed in brain.

It localises to the cytoplasmic vesicle. It is found in the secretory vesicle. The protein resides in the synaptic vesicle membrane. The protein localises to the cell projection. Its subcellular location is the dendritic spine. It localises to the postsynaptic cell membrane. It is found in the membrane. Functionally, plays an essential role in docking and fusion steps of regulated exocytosis. At the presynaptic level, RPH3A is recruited by RAB3A to the synaptic vesicle membrane in a GTP-dependent manner where it modulates synaptic vesicle trafficking and calcium-triggered neurotransmitter release. In the post-synaptic compartment, forms a ternary complex with GRIN2A and DLG4 and regulates NMDA receptor stability. Also plays a role in the exocytosis of arginine vasopressin hormone. The protein is Rabphilin-3A (RPH3A) of Bos taurus (Bovine).